The primary structure comprises 446 residues: Probable D-serine dehydratase (446 aa).

Lys116 carries the post-translational modification N6-(pyridoxal phosphate)lysine.

Belongs to the serine/threonine dehydratase family. DsdA subfamily. Pyridoxal 5'-phosphate is required as a cofactor.

The enzyme catalyses D-serine = pyruvate + NH4(+). The protein is Probable D-serine dehydratase of Bacillus thuringiensis (strain Al Hakam).